We begin with the raw amino-acid sequence, 180 residues long: MRILGIDPGLRVTGFGVIDQSGHTLSYVASGVIKTADADLPSRLGTIFEGISTLIRQHSPDQSAIEKVFVNVNPQSTLLLGQARGAAICGLVAGGVPVAEYTALQLKQAVVGYGRATKEQMQQMVVRLLNLSGVPGTDAADALGMAICHAHGGTTLSTLGGIAPSLAKKGLRVRRGRLVG.

Residues aspartate 7, glutamate 66, and aspartate 138 contribute to the active site. Mg(2+) contacts are provided by aspartate 7, glutamate 66, and aspartate 138.

The protein belongs to the RuvC family. In terms of assembly, homodimer which binds Holliday junction (HJ) DNA. The HJ becomes 2-fold symmetrical on binding to RuvC with unstacked arms; it has a different conformation from HJ DNA in complex with RuvA. In the full resolvosome a probable DNA-RuvA(4)-RuvB(12)-RuvC(2) complex forms which resolves the HJ. Mg(2+) serves as cofactor.

Its subcellular location is the cytoplasm. The enzyme catalyses Endonucleolytic cleavage at a junction such as a reciprocal single-stranded crossover between two homologous DNA duplexes (Holliday junction).. In terms of biological role, the RuvA-RuvB-RuvC complex processes Holliday junction (HJ) DNA during genetic recombination and DNA repair. Endonuclease that resolves HJ intermediates. Cleaves cruciform DNA by making single-stranded nicks across the HJ at symmetrical positions within the homologous arms, yielding a 5'-phosphate and a 3'-hydroxyl group; requires a central core of homology in the junction. The consensus cleavage sequence is 5'-(A/T)TT(C/G)-3'. Cleavage occurs on the 3'-side of the TT dinucleotide at the point of strand exchange. HJ branch migration catalyzed by RuvA-RuvB allows RuvC to scan DNA until it finds its consensus sequence, where it cleaves and resolves the cruciform DNA. The protein is Crossover junction endodeoxyribonuclease RuvC of Paraburkholderia xenovorans (strain LB400).